The primary structure comprises 434 residues: MSNFSPREIVSELDRFIIGQKDAKRAVAIALRNRWRRQQLEGQMREEVMPKNILMIGPTGVGKTEISRRLAKLAGAPFVKVEATKFTEVGYVGRDVEQIIRDLVEIAITLVREKRREDVKAKAHLNAEERVLDALVGKTASPATRDSFRKKLRNGEMDDKEIEIEVSDSGASPNFEIPGMPGANIGVLNISDMLGKAMGGRTKTRKTTVKDSYPILINDESDKLLDQDQIVQEALRVSEDEGIVFIDEIDKIAAREGGSGAGVSREGVQRDLLPLVEGTTVATKYGPVKTDHILFITSGAFHVSKPSDLLPELQGRLPIRVELSALTREDFRRILTETEASLIKQYIALMETEEVKLEFSDDAIDALADIAVDLNATVENIGARRLQTVMEKVLDEISFTAPDKAGATFIIDAAYVKEKIGGLAKNTDLSRFIL.

Residues I18, 60-65, D247, E312, and R384 each bind ATP; that span reads GVGKTE.

It belongs to the ClpX chaperone family. HslU subfamily. A double ring-shaped homohexamer of HslV is capped on each side by a ring-shaped HslU homohexamer. The assembly of the HslU/HslV complex is dependent on binding of ATP.

The protein localises to the cytoplasm. ATPase subunit of a proteasome-like degradation complex; this subunit has chaperone activity. The binding of ATP and its subsequent hydrolysis by HslU are essential for unfolding of protein substrates subsequently hydrolyzed by HslV. HslU recognizes the N-terminal part of its protein substrates and unfolds these before they are guided to HslV for hydrolysis. In Brucella suis (strain ATCC 23445 / NCTC 10510), this protein is ATP-dependent protease ATPase subunit HslU.